The following is a 999-amino-acid chain: Disks large-associated protein 1 (999 aa).

Disordered stretches follow at residues His155–Ser213, Met395–Ala418, and Asn918–Glu989. Residues Arg194 to Asn204 are compositionally biased toward basic and acidic residues. Basic and acidic residues-rich tracts occupy residues Asp923–Leu932 and Leu947–Lys965. Over residues Val976–Ala985 the composition is skewed to polar residues. The short motif at Thr997 to Leu999 is the PDZ-binding element.

This sequence belongs to the SAPAP family.

Its subcellular location is the cell membrane. The protein resides in the postsynaptic density. The protein localises to the synapse. Part of the postsynaptic scaffold in neuronal cells. The protein is Disks large-associated protein 1 of Danio rerio (Zebrafish).